Reading from the N-terminus, the 80-residue chain is Protein Vpu (80 aa).

Over 1–6 (MYILGL) the chain is Extracellular. Residues 7–27 (GIGALVVTFIIAVIVWTIVYI) traverse the membrane as a helical segment. The Cytoplasmic segment spans residues 28–80 (EYKKLVRQKKIDRLIERIGERAEDSGNESDGDTEELSKLMEMGHLNLGYVADL). Phosphoserine; by host CK2 occurs at positions 52 and 56.

It belongs to the HIV-1 VPU protein family. Homopentamer. Interacts with host CD4 and BRTC; these interactions induce proteasomal degradation of CD4. Interacts with host BST2; this interaction leads to the degradation of host BST2. Interacts with host FBXW11. Interacts with host AP1M1; this interaction plays a role in the mistrafficking and subsequent degradation of host BST2. Interacts with host RANBP2; this interaction allows Vpu to down-regulate host BLM sumoylation. In terms of processing, phosphorylated by host CK2. This phosphorylation is necessary for interaction with human BTRC and degradation of CD4.

The protein localises to the host membrane. With respect to regulation, ion channel activity is inhibited by hexamethylene amiloride in vitro. Functionally, enhances virion budding by targeting host CD4 and Tetherin/BST2 to proteasome degradation. Degradation of CD4 prevents any unwanted premature interactions between viral Env and its host receptor CD4 in the endoplasmic reticulum. Degradation of antiretroviral protein Tetherin/BST2 is important for virion budding, as BST2 tethers new viral particles to the host cell membrane. Mechanistically, Vpu bridges either CD4 or BST2 to BTRC, a substrate recognition subunit of the Skp1/Cullin/F-box protein E3 ubiquitin ligase, induces their ubiquitination and subsequent proteasomal degradation. The alteration of the E3 ligase specificity by Vpu seems to promote the degradation of host IKBKB, leading to NF-kappa-B down-regulation and subsequent apoptosis. Acts as a viroporin that forms an oligomeric ion channel in membranes. Modulates the host DNA repair mechanisms to promote degradation of nuclear viral cDNA in cells that are already productively infected in order to suppress immune sensing and proviral hyper-integration (superinfection). Manipulates PML-NBs and modulates SUMOylation of host BLM protein thereby enhancing its DNA-end processing activity toward viral unintegrated linear DNA. Also inhibits RAD52-mediated homologous repair of viral cDNA, preventing the generation of dead-end circular forms of single copies of the long terminal repeat and permitting sustained nucleolytic attack. The sequence is that of Protein Vpu from Human immunodeficiency virus type 1 group M subtype H (isolate 90CF056) (HIV-1).